Reading from the N-terminus, the 188-residue chain is Elongation factor P (188 aa).

Position 34 is an N6-(3,6-diaminohexanoyl)-5-hydroxylysine (Lys-34).

This sequence belongs to the elongation factor P family. May be beta-lysylated on the epsilon-amino group of Lys-34 by the combined action of EpmA and EpmB, and then hydroxylated on the C5 position of the same residue by EpmC (if this protein is present). Lysylation is critical for the stimulatory effect of EF-P on peptide-bond formation. The lysylation moiety may extend toward the peptidyltransferase center and stabilize the terminal 3-CCA end of the tRNA. Hydroxylation of the C5 position on Lys-34 may allow additional potential stabilizing hydrogen-bond interactions with the P-tRNA.

It localises to the cytoplasm. Its pathway is protein biosynthesis; polypeptide chain elongation. In terms of biological role, involved in peptide bond synthesis. Alleviates ribosome stalling that occurs when 3 or more consecutive Pro residues or the sequence PPG is present in a protein, possibly by augmenting the peptidyl transferase activity of the ribosome. Modification of Lys-34 is required for alleviation. The sequence is that of Elongation factor P from Xanthomonas axonopodis pv. citri (strain 306).